We begin with the raw amino-acid sequence, 491 residues long: Pre-glycoprotein polyprotein GP complex (491 aa).

Gly-2 is lipidated: N-myristoyl glycine; by host. The Extracellular portion of the chain corresponds to 2 to 17 (GQIVTFFQEVPHVIEE). A helical transmembrane segment spans residues 18–33 (VMNIVLIALSVLAVLK). Over 34–58 (GLYNFATCGLVGLVTFLLLCGRSCT) the chain is Cytoplasmic. Cys-57 lines the Zn(2+) pocket. Over 59-432 (TSLYKGVYEL…QGKTPLGLVD (374 aa)) the chain is Extracellular. N-linked (GlcNAc...) asparagine; by host glycans are attached at residues Asn-79, Asn-89, Asn-99, Asn-109, Asn-119, and Asn-167. 6 disulfides stabilise this stretch: Cys-86–Cys-231, Cys-118–Cys-155, Cys-180–Cys-212, Cys-279–Cys-292, Cys-301–Cys-310, and Cys-364–Cys-385. Asn-224 carries N-linked (GlcNAc...) asparagine; by host glycosylation. Asn-365, Asn-373, Asn-390, and Asn-395 each carry an N-linked (GlcNAc...) asparagine; by host glycan. Residues 433 to 453 (LFVFSTSFYLISIFLHLVKIP) form a helical membrane-spanning segment. At 454-491 (THRHIVGKSCPKPHRLNHMGICSCGLYKQPGVPVKWKR) the chain is on the cytoplasmic side. His-455, His-457, Cys-463, His-467, Cys-475, and Cys-477 together coordinate Zn(2+).

Belongs to the arenaviridae GPC protein family. As to quaternary structure, interacts with glycoprotein G2. Part of the GP complex (GP-C) together with glycoprotein G1 and glycoprotein G2. The GP-complex interacts with protein Z, which interacts with ribonucleocapsid; these interactions may induce virion budding. In terms of assembly, homotrimer; disulfide-linked. In pre-fusion state, G1 homotrimers bind G2 homotrimers via ionic interactions. Part of the GP complex (GP-C) together with glycoprotein G2 and the stable signal peptide. Interacts with the primary host receptor DAG1 on the cell surface; this interaction occurs at pH 8.0 but not at pH 6.0 and below. Upon virus internalization and at endosomal pH, interacts with the host lysosomal protein LAMP1; this interaction mediates G1 dissociation from GP-C and membrane fusion. The GP-complex interacts with protein Z, which interacts with ribonucleocapsid; these interactions may induce virion budding. Homotrimer. Interacts with the stable signal peptide. In pre-fusion state, G2 homotrimers bind G1 homotrimers via ionic interactions. Part of the GP complex (GP-C) together with glycoprotein G1 and the stable signal peptide. Acidification in the endosome triggers rearrangements, which ultimately leads to a 6 helix bundle formed by the two heptad repeat domains (HR1 and HR2) in post-fusion state. The GP-complex interacts with protein Z, which interacts with ribonucleocapsid; these interactions may induce virion budding. Specific enzymatic cleavages in vivo yield mature proteins. GP-C polyprotein is cleaved in the endoplasmic reticulum by the host protease MBTPS1. Only cleaved glycoprotein is incorporated into virions. Post-translationally, the SSP remains stably associated with the GP complex following cleavage by signal peptidase and plays crucial roles in the trafficking of GP through the secretory pathway. In terms of processing, myristoylation is necessary for GP2-mediated fusion activity.

It localises to the virion membrane. It is found in the host endoplasmic reticulum membrane. The protein localises to the host Golgi apparatus membrane. The protein resides in the host cell membrane. Functionally, functions as a cleaved signal peptide that is retained as the third component of the GP complex (GP-C). Helps to stabilize the spike complex in its native conformation. The SSP is required for efficient glycoprotein expression, post-translational maturation cleavage of G1 and G2, glycoprotein transport to the cell surface plasma membrane, formation of infectious virus particles, and acid pH-dependent glycoprotein-mediated cell fusion. In terms of biological role, forms the virion spikes together with glycoprotein G2. The glycoprotein spike trimers are connected to the underlying matrix. Interacts with the host receptor. Mediates virus attachment to the host primary receptor alpha-dystroglycan DAG1 (alpha-DG) at the cell surface. This attachment induces virion internalization apparently through macropinocytosis. Following endocytosis, there is a pH-dependent switch from binding DAG1 to the host lysosomal receptor LAMP1. This latter binding triggers the dissociation of GP1, exposing the fusion subunit, GP2, such that fusion can occur. Down-modulates host DAG1. Its function is as follows. Forms the virion spikes together with glycoprotein G1. The glycoprotein spike trimers are connected to the underlying matrix. Class I viral fusion protein that directs fusion of viral and host endosomal membranes, leading to delivery of the nucleocapsid into the cytoplasm. Membrane fusion is mediated by irreversible conformational changes induced by acidification. The sequence is that of Pre-glycoprotein polyprotein GP complex from Homo sapiens (Human).